A 178-amino-acid polypeptide reads, in one-letter code: Large ribosomal subunit protein uL6 (178 aa).

The protein belongs to the universal ribosomal protein uL6 family. As to quaternary structure, part of the 50S ribosomal subunit.

Its function is as follows. This protein binds to the 23S rRNA, and is important in its secondary structure. It is located near the subunit interface in the base of the L7/L12 stalk, and near the tRNA binding site of the peptidyltransferase center. The polypeptide is Large ribosomal subunit protein uL6 (Halobacterium salinarum (strain ATCC 700922 / JCM 11081 / NRC-1) (Halobacterium halobium)).